A 585-amino-acid chain; its full sequence is Arginine--tRNA ligase (585 aa).

The short motif at 127–137 (PNTNKPLHVGH) is the 'HIGH' region element.

Belongs to the class-I aminoacyl-tRNA synthetase family. Monomer.

The protein resides in the cytoplasm. It catalyses the reaction tRNA(Arg) + L-arginine + ATP = L-arginyl-tRNA(Arg) + AMP + diphosphate. The polypeptide is Arginine--tRNA ligase (Borrelia duttonii (strain Ly)).